We begin with the raw amino-acid sequence, 770 residues long: Tripartite terminase subunit 1 (770 aa).

The segment at 199 to 227 (CAICFEELCITANQGETLHRRLLGCICDH) adopts a C3H1-type zinc-finger fold. 675–682 (FTSVFHCG) serves as a coordination point for ATP.

It belongs to the herpesviridae TRM1 protein family. Associates with TRM2 and TRM3 to form the tripartite terminase complex. Interacts with portal protein.

The protein localises to the host nucleus. Component of the molecular motor that translocates viral genomic DNA in empty capsid during DNA packaging. Forms a tripartite terminase complex together with TRM2 and TRM3 in the host cytoplasm. Once the complex reaches the host nucleus, it interacts with the capsid portal vertex. This portal forms a ring in which genomic DNA is translocated into the capsid. TRM1 carries an endonuclease activity that plays an important role for the cleavage of concatemeric viral DNA into unit length genomes. The sequence is that of Tripartite terminase subunit 1 from Varicella-zoster virus (strain Dumas) (HHV-3).